The following is a 177-amino-acid chain: Inner membrane-spanning protein YciB (177 aa).

5 helical membrane-spanning segments follow: residues 22 to 42 (IFIA…IHWI), 50 to 70 (ISLF…FFHN), 76 to 96 (WKIT…QFFT), 121 to 141 (FIWS…AYYF), and 149 to 169 (FKVF…SIYI).

Belongs to the YciB family.

Its subcellular location is the cell inner membrane. Its function is as follows. Plays a role in cell envelope biogenesis, maintenance of cell envelope integrity and membrane homeostasis. This Buchnera aphidicola subsp. Acyrthosiphon pisum (strain APS) (Acyrthosiphon pisum symbiotic bacterium) protein is Inner membrane-spanning protein YciB.